The sequence spans 80 residues: Exodeoxyribonuclease 7 small subunit (80 aa).

Belongs to the XseB family. In terms of assembly, heterooligomer composed of large and small subunits.

The protein localises to the cytoplasm. The catalysed reaction is Exonucleolytic cleavage in either 5'- to 3'- or 3'- to 5'-direction to yield nucleoside 5'-phosphates.. Its function is as follows. Bidirectionally degrades single-stranded DNA into large acid-insoluble oligonucleotides, which are then degraded further into small acid-soluble oligonucleotides. This Streptomyces avermitilis (strain ATCC 31267 / DSM 46492 / JCM 5070 / NBRC 14893 / NCIMB 12804 / NRRL 8165 / MA-4680) protein is Exodeoxyribonuclease 7 small subunit.